An 87-amino-acid polypeptide reads, in one-letter code: Large ribosomal subunit protein bL31B (87 aa).

The protein belongs to the bacterial ribosomal protein bL31 family. Type B subfamily. As to quaternary structure, part of the 50S ribosomal subunit.

This Latilactobacillus sakei subsp. sakei (strain 23K) (Lactobacillus sakei subsp. sakei) protein is Large ribosomal subunit protein bL31B.